We begin with the raw amino-acid sequence, 239 residues long: tRNA1(Val) (adenine(37)-N6)-methyltransferase (239 aa).

Belongs to the methyltransferase superfamily. tRNA (adenine-N(6)-)-methyltransferase family.

The protein localises to the cytoplasm. It catalyses the reaction adenosine(37) in tRNA1(Val) + S-adenosyl-L-methionine = N(6)-methyladenosine(37) in tRNA1(Val) + S-adenosyl-L-homocysteine + H(+). In terms of biological role, specifically methylates the adenine in position 37 of tRNA(1)(Val) (anticodon cmo5UAC). This chain is tRNA1(Val) (adenine(37)-N6)-methyltransferase, found in Trichodesmium erythraeum (strain IMS101).